The following is a 376-amino-acid chain: Cytochrome-c peroxidase IdrP1 (376 aa).

Positions 1-24 (MGHIRSIRLALAVAAVCTAASAAA) are cleaved as a signal peptide. Cytochrome c domains are found at residues 49 to 157 (DKVA…AAFK) and 203 to 354 (AEAQ…EALS). Residues C71, C74, H75, C218, C221, and H222 each contribute to the heme c site.

The iodate reductase (Idr) complex is composed of a molybdopterin-dependent iodate reductase (IdrA and IdrB subunits) and two associated peroxidases (IdrP1 and IdrP2). Heme c is required as a cofactor.

Its subcellular location is the periplasm. It catalyses the reaction 2 Fe(II)-[cytochrome c] + H2O2 + 2 H(+) = 2 Fe(III)-[cytochrome c] + 2 H2O. Functionally, involved in iodate respiration. May play a critical role in detoxification of inadvertent H(2)O(2) generated by the iodate reductase IdrA/IdrB. This is Cytochrome-c peroxidase IdrP1 from Denitromonas iodatirespirans.